The following is a 204-amino-acid chain: Golgi to ER traffic protein 1 (204 aa).

The Lumenal segment spans residues 1-11; it reads MLTLDIDPYTI. Residues 12-31 form a helical membrane-spanning segment; sequence LVTSFLILAIQKLVTVIGKQ. The Cytoplasmic portion of the chain corresponds to 32–116; that stretch reads KIQLYIWQIY…RIDSITKLAI (85 aa). Positions 78-113 form a coiled coil; the sequence is AKWTKINRALDKLKLEVQELNETIAGEKTRIDSITK. The helical transmembrane segment at 117 to 137 threads the bilayer; sequence TLILTLPIWFLRIFCRKTALL. Topologically, residues 138-161 are lumenal; the sequence is YIRKGILPAYLEWWLALPFFKSGT. A helical transmembrane segment spans residues 162–178; it reads IGLTCWMFVVNSVLSNL. The Cytoplasmic portion of the chain corresponds to 179–204; it reads IFLISFPFTQKVERPIKPKNEQKTES.

It belongs to the WRB/GET1 family. In terms of assembly, component of the Golgi to ER traffic (GET) complex, which is composed of GET1, GET2 and GET3. Within the complex, GET1 and GET2 form a heterotetramer which is stabilized by phosphatidylinositol binding and which binds to the GET3 homodimer.

It is found in the endoplasmic reticulum membrane. Its subcellular location is the golgi apparatus membrane. Required for the post-translational delivery of tail-anchored (TA) proteins to the endoplasmic reticulum. Together with GET2, acts as a membrane receptor for soluble GET3, which recognizes and selectively binds the transmembrane domain of TA proteins in the cytosol. The GET complex cooperates with the HDEL receptor ERD2 to mediate the ATP-dependent retrieval of resident ER proteins that contain a C-terminal H-D-E-L retention signal from the Golgi to the ER. In Lodderomyces elongisporus (strain ATCC 11503 / CBS 2605 / JCM 1781 / NBRC 1676 / NRRL YB-4239) (Yeast), this protein is Golgi to ER traffic protein 1.